Consider the following 316-residue polypeptide: Pantothenate kinase (316 aa).

95-102 (GSVSVGKS) contacts ATP.

Belongs to the prokaryotic pantothenate kinase family.

The protein localises to the cytoplasm. It carries out the reaction (R)-pantothenate + ATP = (R)-4'-phosphopantothenate + ADP + H(+). The protein operates within cofactor biosynthesis; coenzyme A biosynthesis; CoA from (R)-pantothenate: step 1/5. The polypeptide is Pantothenate kinase (Actinobacillus pleuropneumoniae serotype 7 (strain AP76)).